A 1070-amino-acid polypeptide reads, in one-letter code: Duffy receptor gamma form (1070 aa).

Residues 1–21 (MEGKKKRPLFFLLVLLLSHKA) form the signal peptide. Topologically, residues 22-1003 (NNVLFERMNG…SYECFTKGSS (982 aa)) are extracellular. 2 N-linked (GlcNAc...) asparagine glycosylation sites follow: N134 and N179. 2 disulfides stabilise this stretch: C214/C243 and C227/C234. A Cell attachment site motif is present at residues 279 to 281 (RGD). Intrachain disulfides connect C296/C372, C410/C427, C422/C502, and C431/C500. The interval 518 to 912 (VGSGVESKAP…LNNRKLNRDQ (395 aa)) is disordered. A compositionally biased stretch (polar residues) spans 526–541 (APSSNPINEAVKSSSG). Basic and acidic residues-rich tracts occupy residues 544–559 (KVQE…EGEG), 672–707 (GEVH…DDRS), and 714–731 (HTDE…KDTE). The N-linked (GlcNAc...) asparagine glycan is linked to N676. Positions 732 to 763 (TTGGSTLTPEQNVSVASDNGNVPGSGNKQNEG) are enriched in polar residues. Residue N743 is glycosylated (N-linked (GlcNAc...) asparagine). A compositionally biased stretch (low complexity) spans 766-776 (ALSGAESLESS). N785 is a glycosylation site (N-linked (GlcNAc...) asparagine). Positions 796-807 (GNEKDFQKHDFM) are enriched in basic and acidic residues. Residues 814–863 (DQTSSDHTSSDQTSSDQTSSDQTSSDQTSSDQTSSDQTSSDQTSSDQTID) are compositionally biased toward low complexity. The span at 864-888 (TEGHHRDNVRNPEIKSSEDMSKGDF) shows a compositional bias: basic and acidic residues. Residues 890–906 (RNSNSNELYSHNNLNNR) are compositionally biased toward polar residues. An N-linked (GlcNAc...) asparagine glycan is attached at N936. A helical transmembrane segment spans residues 1004 to 1025 (TGIVYFATGGAFLIILLLFASW). The Cytoplasmic portion of the chain corresponds to 1026–1070 (NAASNDYEEEATFDEFEEYCYNIHRTPQMPNDIEHMQQFTPLDYS).

It localises to the membrane. Functionally, binds to Neu5Gc-sialylated receptors on macaque erythrocytes. The sequence is that of Duffy receptor gamma form from Plasmodium knowlesi.